The sequence spans 1637 residues: Serine/threonine-protein kinase Genghis Khan (1637 aa).

The Protein kinase domain maps to 100 to 369 (FDILKIIGRG…IQDFMDHPWF (270 aa)). ATP is bound by residues 106–114 (IGRGAFGEV) and Lys-129. Asp-224 (proton acceptor) is an active-site residue. The region spanning 370–440 (VGIDWKNIRQ…SLTSSSTLDS (71 aa)) is the AGC-kinase C-terminal domain. 3 coiled-coil regions span residues 473 to 587 (VDSV…EDAV), 643 to 688 (SEKL…LKYT), and 839 to 881 (DELS…DLQK). A disordered region spans residues 538 to 575 (RNQKQKLSRQVRDKEEELDGAMQKNDSLRNELRKSDKT). The segment covering 563–575 (DSLRNELRKSDKT) has biased composition (basic and acidic residues). Thr-895 is subject to Phosphothreonine. Residues 952 to 971 (NNKDHSSMKEASVSDLSREE) are disordered. A Phorbol-ester/DAG-type zinc finger spans residues 989–1039 (IHQFLVRTFSSPTKCNHCTSLMVGLTRQGVVCEICGFACHTICCQKVPTTC). Residues 1059-1177 (GTAYEGYVKV…WVIALGELHR (119 aa)) enclose the PH domain. Residues 1203–1489 (IRNALCSVII…LPLNNLGNVV (287 aa)) enclose the CNH domain. Residues 1546-1559 (ISAPTNFNHISHMG) form the CRIB domain. At Ser-1584 the chain carries Phosphoserine. A disordered region spans residues 1611-1637 (DYGNDNIISRTPSPMASSFMDGLSNND). Positions 1616–1626 (NIISRTPSPMA) are enriched in polar residues.

It belongs to the protein kinase superfamily. AGC Ser/Thr protein kinase family. DMPK subfamily. In terms of assembly, interacts tightly with GTP-bound but not GDP-bound Cdc42.

It carries out the reaction L-seryl-[protein] + ATP = O-phospho-L-seryl-[protein] + ADP + H(+). It catalyses the reaction L-threonyl-[protein] + ATP = O-phospho-L-threonyl-[protein] + ADP + H(+). In terms of biological role, acts as a downstream effector for the regulation of actin polymerization by Cdc42. In Drosophila melanogaster (Fruit fly), this protein is Serine/threonine-protein kinase Genghis Khan (gek).